Consider the following 383-residue polypeptide: Prokineticin receptor 2 (383 aa).

Over 1–54 (MGDQNGNTSFAPDLNPPQDHVSLLPLNYSYGDYDIPLDDDEDVTKTQTFFAAKI) the chain is Extracellular. N-linked (GlcNAc...) asparagine glycosylation is found at N7 and N27. A helical transmembrane segment spans residues 55-75 (VIGVALAGIMLVCGVGNFVFI). The Cytoplasmic segment spans residues 76–89 (AALARYKKLRNLTN). Residues 90 to 110 (LLIANLAISDFLVAIVCCPFE) traverse the membrane as a helical segment. The Extracellular segment spans residues 111–136 (MDYYVVRQLSWEHGHVLCASVNYLRT). C128 and C207 form a disulfide bridge. The helical transmembrane segment at 137–157 (VSLYVSTNALLAIAIDRYLAI) threads the bilayer. Over 158–170 (VHPLKRMNYQTAS) the chain is Cytoplasmic. A helical membrane pass occupies residues 171–191 (FLIALVWMVSILIAIPSAYFT). Over 192 to 222 (TETILVIVKNQEKLFCGQIWPVDQQLYYKSY) the chain is Extracellular. Residues 223-243 (FLFVFGLEFVGPVVTMTLCYA) form a helical membrane-spanning segment. At 244 to 272 (RISQELWFKAVPGFQTEQIRKRLRCRRKT) the chain is on the cytoplasmic side. Residues 273–293 (VLLLMGILTAYVLCWAPFYGF) traverse the membrane as a helical segment. The Extracellular segment spans residues 294–312 (TIVRDFFPTLVVKEKHYLT). Residues 313 to 333 (AFYVVECIAMSNSMINTICFV) traverse the membrane as a helical segment. At 334 to 383 (TVKNNTMKYFKKMLLLHWRPSHYGSKSSADLDLKTSGVPATEEVDCIRLK) the chain is on the cytoplasmic side.

It belongs to the G-protein coupled receptor 1 family. Homodimer. In terms of tissue distribution, abundantly expressed in the CNS and reproductive organs with the highest levels in the cerebrum, cerebellum, testis and ovary.

Its subcellular location is the cell membrane. In terms of biological role, receptor for prokineticin 2. Exclusively coupled to the G(q) subclass of heteromeric G proteins. Activation leads to mobilization of calcium, stimulation of phosphoinositide turnover and activation of p44/p42 mitogen-activated protein kinase. The chain is Prokineticin receptor 2 (Prokr2) from Rattus norvegicus (Rat).